Consider the following 3187-residue polypeptide: Cilia- and flagella-associated protein 47 (3187 aa).

Residues 1746 to 1869 (SDSERILLSW…LCVYMYERLP (124 aa)) enclose the Calponin-homology (CH) domain. The tract at residues 2024–2052 (KLTESRQYPKHDDDMSSSGSDTDQGCSDS) is disordered. Residues 2026–2037 (TESRQYPKHDDD) are compositionally biased toward basic and acidic residues.

In terms of assembly, interacts with CFAP65. As to expression, highly expressed in spermatzoa (at protein level).

Its subcellular location is the cytoplasm. It localises to the cytoskeleton. It is found in the flagellum basal body. Functionally, plays a role in flagellar formation and sperm motility. This Homo sapiens (Human) protein is Cilia- and flagella-associated protein 47.